Reading from the N-terminus, the 456-residue chain is Endoglucanase A (456 aa).

An N-terminal signal peptide occupies residues 1-30 (MSRIRRFLATALAAATAGVGAIVTAIASAG). Residues 31–322 (PAHAYDSPFY…RAYELAMNAA (292 aa)) are catalytic. Asp113 is a catalytic residue. Intrachain disulfides connect Cys114-Cys159 and Cys267-Cys302. Catalysis depends on Asp151, which acts as the Proton donor. The tract at residues 255–280 (SRNGNGPLGSEWCDPPGRATGTWSTT) is disordered. Catalysis depends on Asp300, which acts as the Nucleophile. Positions 321–358 (AAPPTYSPSPTPSTPSPSPSQSDPGSPSPSPSQPPAGR) are disordered. Residues 323 to 355 (PPTYSPSPTPSTPSPSPSQSDPGSPSPSPSQPP) form a linker ('hinge') (Pro-Ser box) region. Pro residues predominate over residues 325–338 (TYSPSPTPSTPSPS). The CBM2 domain occupies 353-456 (QPPAGRACEA…LSSSITCSAS (104 aa)). Cys360 and Cys453 are disulfide-bonded.

This sequence belongs to the glycosyl hydrolase 6 (cellulase B) family.

It catalyses the reaction Endohydrolysis of (1-&gt;4)-beta-D-glucosidic linkages in cellulose, lichenin and cereal beta-D-glucans.. This chain is Endoglucanase A (celA), found in Thermobispora bispora (Microbispora bispora).